Reading from the N-terminus, the 342-residue chain is tRNA N6-adenosine threonylcarbamoyltransferase (342 aa).

Residues His-111 and His-115 each coordinate Fe cation. Substrate is bound by residues 134-138, Asp-167, Gly-180, and Asn-277; that span reads LVSGG. Residue Asp-305 participates in Fe cation binding.

This sequence belongs to the KAE1 / TsaD family. The cofactor is Fe(2+).

The protein resides in the cytoplasm. The enzyme catalyses L-threonylcarbamoyladenylate + adenosine(37) in tRNA = N(6)-L-threonylcarbamoyladenosine(37) in tRNA + AMP + H(+). Required for the formation of a threonylcarbamoyl group on adenosine at position 37 (t(6)A37) in tRNAs that read codons beginning with adenine. Is involved in the transfer of the threonylcarbamoyl moiety of threonylcarbamoyl-AMP (TC-AMP) to the N6 group of A37, together with TsaE and TsaB. TsaD likely plays a direct catalytic role in this reaction. The chain is tRNA N6-adenosine threonylcarbamoyltransferase from Cellvibrio japonicus (strain Ueda107) (Pseudomonas fluorescens subsp. cellulosa).